Reading from the N-terminus, the 175-residue chain is Bcl-2-related protein A1 (175 aa).

The BH1 signature appears at 77-97 (KEFEDGIINWGRIVTIFAFEG). A BH2 motif is present at residues 132-147 (EWIRQNGGWENGFVKK).

This sequence belongs to the Bcl-2 family. In terms of assembly, interacts directly with BAK1, BID, BMF and BBC3. Interacts directly with BCL2L11/BIM. Interacts with BAX isoform Sigma. Interacts directly with PMAIP1. Interacts with RTL10/BOP. Interacts with ING4. Interacts with UBQLN4. As to expression, seems to be restricted to the hematopoietic compartment. Expressed in peripheral blood, spleen, and bone marrow, at moderate levels in lung, small intestine and testis, at a minimal levels in other tissues. Also found in vascular smooth muscle cells and hematopoietic malignancies.

It is found in the cytoplasm. Functionally, retards apoptosis induced by IL-3 deprivation. May function in the response of hemopoietic cells to external signals and in maintaining endothelial survival during infection. Can inhibit apoptosis induced by serum starvation in the mammary epithelial cell line HC11. The polypeptide is Bcl-2-related protein A1 (BCL2A1) (Homo sapiens (Human)).